We begin with the raw amino-acid sequence, 84 residues long: Esculentin-1Vb (84 aa).

An N-terminal signal peptide occupies residues 1-22; sequence MFTLKKPLLLIVLLGIISLSLC. The propeptide occupies 23–36; the sequence is EQERNADEDEESET. A disulfide bridge links cysteine 78 with cysteine 84.

In terms of tissue distribution, expressed by the skin glands.

Its subcellular location is the secreted. In terms of biological role, antimicrobial peptide. In Odorrana versabilis (Chinese bamboo leaf odorous frog), this protein is Esculentin-1Vb.